Here is a 640-residue protein sequence, read N- to C-terminus: Threonine--tRNA ligase (640 aa).

The tract at residues 224 to 525 (DHRKLGKELD…LTEHYAGAFP (302 aa)) is catalytic. 3 residues coordinate Zn(2+): C323, H374, and H502.

This sequence belongs to the class-II aminoacyl-tRNA synthetase family. Homodimer. Zn(2+) serves as cofactor.

It localises to the cytoplasm. It catalyses the reaction tRNA(Thr) + L-threonine + ATP = L-threonyl-tRNA(Thr) + AMP + diphosphate + H(+). Its function is as follows. Catalyzes the attachment of threonine to tRNA(Thr) in a two-step reaction: L-threonine is first activated by ATP to form Thr-AMP and then transferred to the acceptor end of tRNA(Thr). Also edits incorrectly charged L-seryl-tRNA(Thr). The chain is Threonine--tRNA ligase from Tropheryma whipplei (strain Twist) (Whipple's bacillus).